Here is a 361-residue protein sequence, read N- to C-terminus: MGYISLALVALLVFFASPVVLADDITPIPADRAQIPQWFMANVKPFSQRRGTLDPELEAAEASRRVIIVNQNGGGDFKTINAAIKSIPLANKNRVIIKLAPGIYHEKVTVDVGRPYVTLLGKPGAETNLTYAGTAAKYGTVESATLIVWATNFLAANLNIINTSPMPKPGTQGQALAMRINGDKAAFYNCRFYGFQDTLCDDRGNHFFKNCYIEGTYDFIFGRGASLYLTTQLHAVGDGLRVIAAHNRQSTTEQNGYSFVHCKVTGVGTGIYLGRAWMSHPKVVYSYTEMSSVVNPSGWQENRVRAHDKTVFYGEYMCTGPGSHKAKRVAHTQDIDNKEASQFLTLGYIKGSKWLLPPPAY.

The signal sequence occupies residues 1 to 22 (MGYISLALVALLVFFASPVVLA). A glycan (N-linked (GlcNAc...) asparagine) is linked at asparagine 128. Glutamine 174 is a binding site for substrate. The active-site Proton donor is aspartate 197. Residue aspartate 218 is the Nucleophile of the active site. Substrate-binding residues include arginine 275 and tryptophan 277.

The protein belongs to the pectinesterase family. In terms of tissue distribution, expressed in flower buds.

It localises to the secreted. Its subcellular location is the cell wall. The catalysed reaction is [(1-&gt;4)-alpha-D-galacturonosyl methyl ester](n) + n H2O = [(1-&gt;4)-alpha-D-galacturonosyl](n) + n methanol + n H(+). Its pathway is glycan metabolism; pectin degradation; 2-dehydro-3-deoxy-D-gluconate from pectin: step 1/5. Acts in the modification of cell walls via demethylesterification of cell wall pectin. This is Probable pectinesterase 49 (PME49) from Arabidopsis thaliana (Mouse-ear cress).